The chain runs to 173 residues: Crossover junction endodeoxyribonuclease RuvC (173 aa).

Residues Asp-8, Glu-67, and Asp-139 contribute to the active site. Mg(2+)-binding residues include Asp-8, Glu-67, and Asp-139.

The protein belongs to the RuvC family. In terms of assembly, homodimer which binds Holliday junction (HJ) DNA. The HJ becomes 2-fold symmetrical on binding to RuvC with unstacked arms; it has a different conformation from HJ DNA in complex with RuvA. In the full resolvosome a probable DNA-RuvA(4)-RuvB(12)-RuvC(2) complex forms which resolves the HJ. The cofactor is Mg(2+).

It is found in the cytoplasm. The catalysed reaction is Endonucleolytic cleavage at a junction such as a reciprocal single-stranded crossover between two homologous DNA duplexes (Holliday junction).. In terms of biological role, the RuvA-RuvB-RuvC complex processes Holliday junction (HJ) DNA during genetic recombination and DNA repair. Endonuclease that resolves HJ intermediates. Cleaves cruciform DNA by making single-stranded nicks across the HJ at symmetrical positions within the homologous arms, yielding a 5'-phosphate and a 3'-hydroxyl group; requires a central core of homology in the junction. The consensus cleavage sequence is 5'-(A/T)TT(C/G)-3'. Cleavage occurs on the 3'-side of the TT dinucleotide at the point of strand exchange. HJ branch migration catalyzed by RuvA-RuvB allows RuvC to scan DNA until it finds its consensus sequence, where it cleaves and resolves the cruciform DNA. The chain is Crossover junction endodeoxyribonuclease RuvC from Vibrio vulnificus (strain CMCP6).